The following is a 435-amino-acid chain: BAHD acyltransferase BIA1 (435 aa).

Residues His-151 and Asp-369 each act as proton acceptor in the active site.

It belongs to the plant acyltransferase family. In terms of tissue distribution, mostly expressed in roots (particularly in the root elongation zone), and, to a lower extent, in seedling, leaves (especially in hydathodes), siliques (e.g. in developing seeds) and flowers.

It localises to the cytoplasm. In terms of biological role, monitors brassinosteroids (BR) responses and homeostasis, particularly in the root and hypocotyl in darkness. Promotes flavonoid biosynthesis. In Arabidopsis thaliana (Mouse-ear cress), this protein is BAHD acyltransferase BIA1.